The chain runs to 1486 residues: Chromosome partition protein MukB (1486 aa).

34 to 41 is a binding site for ATP; it reads GGNGAGKS. Coiled coils occupy residues 326–418, 444–480, and 509–603; these read LEAD…QYNQ, LETFQAKELEATEKMLSLEQKMSMAQTAHSQFEQAYQ, and RHLA…RAPV. The tract at residues 666–783 is flexible hinge; it reads PGGSEDQRLN…EVPLFGRAAR (118 aa). Coiled-coil stretches lie at residues 835–923, 977–1115, and 1209–1266; these read EAEI…AKLE, EMLS…TAKA, and VEAI…QNVS.

This sequence belongs to the SMC family. MukB subfamily. As to quaternary structure, homodimerization via its hinge domain. Binds to DNA via its C-terminal region. Interacts, and probably forms a ternary complex, with MukE and MukF via its C-terminal region. The complex formation is stimulated by calcium or magnesium. Interacts with tubulin-related protein FtsZ.

The protein localises to the cytoplasm. The protein resides in the nucleoid. Plays a central role in chromosome condensation, segregation and cell cycle progression. Functions as a homodimer, which is essential for chromosome partition. Involved in negative DNA supercoiling in vivo, and by this means organize and compact chromosomes. May achieve or facilitate chromosome segregation by condensation DNA from both sides of a centrally located replisome during cell division. The protein is Chromosome partition protein MukB of Escherichia coli (strain ATCC 8739 / DSM 1576 / NBRC 3972 / NCIMB 8545 / WDCM 00012 / Crooks).